A 198-amino-acid polypeptide reads, in one-letter code: MEHYISLLVKSIFIENMALSFFLGMCTFLAVSKKVKTSFGLGVAVVVVLTIAVPVNNLVYNLVLKENALVEGVDLSFLNFITFIGVIAALVQILEMVLDRFFPPLYNALGIFLPLITVNCAIFGGVSFMVQRDYNFAESIVYGFGSGVGWMLAIVALAGIREKMKYSDVPPGLRGLGITFITVGLMALGFMSFSGVQL.

6 helical membrane-spanning segments follow: residues 11 to 31 (SIFI…FLAV), 39 to 59 (FGLG…NNLV), 77 to 97 (FLNF…LEMV), 110 to 130 (GIFL…SFMV), 140 to 160 (IVYG…LAGI), and 176 to 196 (LGIT…FSGV).

It belongs to the NqrDE/RnfAE family. Composed of six subunits; NqrA, NqrB, NqrC, NqrD, NqrE and NqrF.

The protein localises to the cell inner membrane. It carries out the reaction a ubiquinone + n Na(+)(in) + NADH + H(+) = a ubiquinol + n Na(+)(out) + NAD(+). Functionally, NQR complex catalyzes the reduction of ubiquinone-1 to ubiquinol by two successive reactions, coupled with the transport of Na(+) ions from the cytoplasm to the periplasm. NqrA to NqrE are probably involved in the second step, the conversion of ubisemiquinone to ubiquinol. The chain is Na(+)-translocating NADH-quinone reductase subunit E from Vibrio campbellii (strain ATCC BAA-1116).